The primary structure comprises 466 residues: Cysteine--tRNA ligase (466 aa).

Position 28 (Cys28) interacts with Zn(2+). Positions 30–40 (PTVYNYIHIGN) match the 'HIGH' region motif. Positions 208, 233, and 237 each coordinate Zn(2+). Residues 265 to 269 (KMSKS) carry the 'KMSKS' region motif. Lys268 is an ATP binding site.

It belongs to the class-I aminoacyl-tRNA synthetase family. As to quaternary structure, monomer. The cofactor is Zn(2+).

The protein resides in the cytoplasm. It catalyses the reaction tRNA(Cys) + L-cysteine + ATP = L-cysteinyl-tRNA(Cys) + AMP + diphosphate. In Staphylococcus carnosus (strain TM300), this protein is Cysteine--tRNA ligase.